The sequence spans 215 residues: Ectodysplasin-A receptor-associated adapter protein (215 aa).

2 disordered regions span residues 1–41 (MGLR…FNMS) and 62–86 (LNCPRNSDMKNQGEENGFPDSTGDP). Residues 17–28 (GHQEDHMVKEPV) show a composition bias toward basic and acidic residues. The Death domain maps to 123-202 (DVIRIKLDPC…KVLRRWVDEE (80 aa)).

As to quaternary structure, self-associates and binds EDAR, TRAF1, TRAF2 and TRAF3. Detected in adult pancreas, placenta and fetal skin, and at lower levels in lung, thymus, prostate and testis.

It localises to the cytoplasm. Adapter protein that interacts with EDAR DEATH domain and couples the receptor to EDA signaling pathway during morphogenesis of ectodermal organs. Mediates the activation of NF-kappa-B. This is Ectodysplasin-A receptor-associated adapter protein (EDARADD) from Homo sapiens (Human).